Consider the following 211-residue polypeptide: High mobility group protein B1-like 1 (211 aa).

N6-acetyllysine occurs at positions 3, 7, 8, 12, 28, 29, and 30. The segment at residues 9–79 is a DNA-binding region (HMG box 1); sequence PRGKMSSYAF…HYERQMKTYI (71 aa). Residues 71-96 form a disordered region; it reads YERQMKTYIPPKGETKKKFKDPNAPK. Positions 83-94 are enriched in basic and acidic residues; it reads GETKKKFKDPNA. The HMG box 2 DNA-binding region spans 95–163; that stretch reads PKRPPSAFFL…KYEKDIAAYQ (69 aa). N6-acetyllysine occurs at positions 127, 128, 172, 173, 177, 180, 182, 183, 184, and 185. Residues 161–211 form a disordered region; the sequence is AYQAKGKPEAAKKGVVKAEKSKKKKEEEEDEEDEEDEEEEDEEDEEDDDDE. The span at 166-179 shows a compositional bias: basic and acidic residues; sequence GKPEAAKKGVVKAE. The span at 187-211 shows a compositional bias: acidic residues; it reads EEEDEEDEEDEEEEDEEDEEDDDDE.

It belongs to the HMGB family.

The protein localises to the nucleus. The protein resides in the chromosome. Binds preferentially single-stranded DNA and unwinds double-stranded DNA. In Homo sapiens (Human), this protein is High mobility group protein B1-like 1 (HMGB1P1).